Consider the following 198-residue polypeptide: Nucleoid occlusion factor SlmA (198 aa).

The HTH tetR-type domain maps to 10-70 (NRREEILQSL…SLIEFIEDSL (61 aa)). A DNA-binding region (H-T-H motif) is located at residues 33 to 52 (TTAKLAASVGVSEAALYRHF). Positions 117-145 (EQDRLQGRINQLFERIEAQLRQVMREKKM) form a coiled coil.

The protein belongs to the nucleoid occlusion factor SlmA family. As to quaternary structure, homodimer. Interacts with FtsZ.

It is found in the cytoplasm. The protein resides in the nucleoid. In terms of biological role, required for nucleoid occlusion (NO) phenomenon, which prevents Z-ring formation and cell division over the nucleoid. Acts as a DNA-associated cell division inhibitor that binds simultaneously chromosomal DNA and FtsZ, and disrupts the assembly of FtsZ polymers. SlmA-DNA-binding sequences (SBS) are dispersed on non-Ter regions of the chromosome, preventing FtsZ polymerization at these regions. The polypeptide is Nucleoid occlusion factor SlmA (Klebsiella pneumoniae subsp. pneumoniae (strain ATCC 700721 / MGH 78578)).